Consider the following 651-residue polypeptide: Acetyl-coenzyme A synthetase (651 aa).

CoA-binding positions include 190-193, threonine 309, and asparagine 333; that span reads RGGR. ATP is bound by residues 385–387, 409–414, aspartate 498, and arginine 513; these read GEP and DTWWQT. Serine 521 is a CoA binding site. Arginine 524 is an ATP binding site. Mg(2+)-binding residues include valine 535, histidine 537, and valine 540. Arginine 582 is a binding site for CoA. At lysine 607 the chain carries N6-acetyllysine.

The protein belongs to the ATP-dependent AMP-binding enzyme family. It depends on Mg(2+) as a cofactor. Post-translationally, acetylated. Deacetylation by the SIR2-homolog deacetylase activates the enzyme.

The enzyme catalyses acetate + ATP + CoA = acetyl-CoA + AMP + diphosphate. Its function is as follows. Catalyzes the conversion of acetate into acetyl-CoA (AcCoA), an essential intermediate at the junction of anabolic and catabolic pathways. AcsA undergoes a two-step reaction. In the first half reaction, AcsA combines acetate with ATP to form acetyl-adenylate (AcAMP) intermediate. In the second half reaction, it can then transfer the acetyl group from AcAMP to the sulfhydryl group of CoA, forming the product AcCoA. The chain is Acetyl-coenzyme A synthetase from Xanthobacter autotrophicus (strain ATCC BAA-1158 / Py2).